We begin with the raw amino-acid sequence, 437 residues long: Protein farnesyltransferase subunit beta (437 aa).

5 PFTB repeats span residues 123-164 (ATDV…CIIG), 174-215 (REKL…SLTN), 222-263 (FEGT…VILK), 270-312 (LKSL…PLLH), and 332-374 (QQAL…SIAQ). (2E,6E)-farnesyl diphosphate-binding positions include 248-251 (HGGY) and 291-294 (RCNK). Positions 297 and 299 each coordinate Zn(2+). Position 300–303 (300–303 (YSFW)) interacts with (2E,6E)-farnesyl diphosphate. Histidine 362 contacts Zn(2+). Serine 432 carries the phosphoserine modification. Threonine 436 is modified (phosphothreonine).

The protein belongs to the protein prenyltransferase subunit beta family. As to quaternary structure, heterodimer of FNTA and FNTB. The cofactor is Zn(2+).

The catalysed reaction is L-cysteinyl-[protein] + (2E,6E)-farnesyl diphosphate = S-(2E,6E)-farnesyl-L-cysteinyl-[protein] + diphosphate. In terms of biological role, essential subunit of the farnesyltransferase complex. Catalyzes the transfer of a farnesyl moiety from farnesyl diphosphate to a cysteine at the fourth position from the C-terminus of several proteins having the C-terminal sequence Cys-aliphatic-aliphatic-X. In Mus musculus (Mouse), this protein is Protein farnesyltransferase subunit beta (Fntb).